We begin with the raw amino-acid sequence, 320 residues long: tRNA pseudouridine synthase B (320 aa).

The Nucleophile role is filled by D41. Disordered regions lie at residues 116–136 (PPQVSAVHVQGERAHARARRG) and 259–284 (DQCQPAPKPLASDQQESAPNQTDPSA). Basic and acidic residues predominate over residues 125–136 (QGERAHARARRG). Residues 270–284 (SDQQESAPNQTDPSA) are compositionally biased toward polar residues.

This sequence belongs to the pseudouridine synthase TruB family. Type 1 subfamily.

It carries out the reaction uridine(55) in tRNA = pseudouridine(55) in tRNA. Responsible for synthesis of pseudouridine from uracil-55 in the psi GC loop of transfer RNAs. The sequence is that of tRNA pseudouridine synthase B from Prochlorococcus marinus (strain MIT 9313).